The chain runs to 495 residues: Glycerol kinase (495 aa).

ADP is bound at residue Thr13. Residues Thr13, Thr14, and Ser15 each contribute to the ATP site. Thr13 provides a ligand contact to sn-glycerol 3-phosphate. Arg17 is an ADP binding site. Sn-glycerol 3-phosphate is bound by residues Arg83, Glu84, Tyr135, and Asp244. Glycerol-binding residues include Arg83, Glu84, Tyr135, Asp244, and Gln245. ADP is bound by residues Thr266 and Gly309. The ATP site is built by Thr266, Gly309, Gln313, and Gly410. The ADP site is built by Gly410 and Asn414.

This sequence belongs to the FGGY kinase family.

The enzyme catalyses glycerol + ATP = sn-glycerol 3-phosphate + ADP + H(+). It functions in the pathway polyol metabolism; glycerol degradation via glycerol kinase pathway; sn-glycerol 3-phosphate from glycerol: step 1/1. With respect to regulation, inhibited by fructose 1,6-bisphosphate (FBP). Key enzyme in the regulation of glycerol uptake and metabolism. Catalyzes the phosphorylation of glycerol to yield sn-glycerol 3-phosphate. The chain is Glycerol kinase from Shewanella amazonensis (strain ATCC BAA-1098 / SB2B).